The primary structure comprises 206 residues: Small ribosomal subunit protein uS4 (206 aa).

In terms of domain architecture, S4 RNA-binding spans 96–156 (RRLDNVVYRM…EKSKNQLRIK (61 aa)).

This sequence belongs to the universal ribosomal protein uS4 family. Part of the 30S ribosomal subunit. Contacts protein S5. The interaction surface between S4 and S5 is involved in control of translational fidelity.

One of the primary rRNA binding proteins, it binds directly to 16S rRNA where it nucleates assembly of the body of the 30S subunit. Functionally, with S5 and S12 plays an important role in translational accuracy. In Hahella chejuensis (strain KCTC 2396), this protein is Small ribosomal subunit protein uS4.